The primary structure comprises 461 residues: Calcitonin gene-related peptide type 1 receptor (461 aa).

Residues 1–22 (MEKKCTLYFLVLLPFFMILVTA) form the signal peptide. The Extracellular portion of the chain corresponds to 23 to 139 (ELEESPEDSI…NTHEKVKTAL (117 aa)). 3 disulfides stabilise this stretch: cysteine 48–cysteine 74, cysteine 65–cysteine 105, and cysteine 88–cysteine 127. Asparagine 66, asparagine 118, and asparagine 123 each carry an N-linked (GlcNAc...) asparagine glycan. Residues 140 to 164 (NLFYLTIIGHGLSIASLLISLGIFF) traverse the membrane as a helical segment. Topologically, residues 165-175 (YFKSLSCQRIT) are cytoplasmic. A helical membrane pass occupies residues 176-198 (LHKNLFFSFVCNSVVTIIHLTAV). Residues 199–209 (ANNQALVATNP) are Extracellular-facing. Residues 210 to 238 (VSCKVSQFIHLYLMGCNYFWMLCEGIYLH) traverse the membrane as a helical segment. Topologically, residues 239 to 252 (TLIVVAVFAEKQHL) are cytoplasmic. A helical transmembrane segment spans residues 253 to 273 (MWYYFLGWGFPLIPACIHAIA). Residues 274 to 289 (RSLYYNDNCWISSDTH) lie on the Extracellular side of the membrane. The interval 288-289 (TH) is required for RAMP3 interaction. A helical membrane pass occupies residues 290–314 (LLYIIHGPICAALLVNLFFLLNIVR). At 315–329 (VLITKLKVTHQAESN) the chain is on the cytoplasmic side. The helical transmembrane segment at 330–351 (LYMKAVRATLILVPLLGIEFVL) threads the bilayer. At 352–366 (IPWRPEGKIAEEVYD) the chain is on the extracellular side. The chain crosses the membrane as a helical span at residues 367–387 (YIMHILMHFQGLLVSTIFCFF). Phosphoserine occurs at positions 420 and 445.

Belongs to the G-protein coupled receptor 2 family. As to quaternary structure, heterodimer of CALCRL and RAMP1; the receptor complex functions as CGRP receptor. Heterodimer of CALCRL and RAMP2 or CALCRL and RAMP3; the complexes function as adrenomedullin receptor. As to expression, predominantly expressed in the lung and heart.

It localises to the cell membrane. Functionally, g protein-coupled receptor which specificity is determined by its interaction with receptor-activity-modifying proteins (RAMPs). Together with RAMP1, form the receptor complex for calcitonin-gene-related peptides CALCA/CGRP1 and CALCB/CGRP2. Together with RAMP2 or RAMP3, function as receptor complexes for adrenomedullin (ADM and ADM2). Ligand binding causes a conformation change that triggers signaling via guanine nucleotide-binding proteins (G proteins) and modulates the activity of downstream effectors. Activates cAMP-dependent pathway. In Homo sapiens (Human), this protein is Calcitonin gene-related peptide type 1 receptor.